The sequence spans 310 residues: tRNA pseudouridine synthase B (310 aa).

The active-site Nucleophile is the D38.

It belongs to the pseudouridine synthase TruB family. Type 1 subfamily.

It carries out the reaction uridine(55) in tRNA = pseudouridine(55) in tRNA. Its function is as follows. Responsible for synthesis of pseudouridine from uracil-55 in the psi GC loop of transfer RNAs. The polypeptide is tRNA pseudouridine synthase B (Geotalea uraniireducens (strain Rf4) (Geobacter uraniireducens)).